The primary structure comprises 714 residues: DNA gyrase subunit B (714 aa).

Positions Ser-492–Pro-606 constitute a Toprim domain. Residues Glu-498, Asp-571, and Asp-573 each contribute to the Mg(2+) site.

Belongs to the type II topoisomerase GyrB family. Heterotetramer, composed of two GyrA and two GyrB chains. In the heterotetramer, GyrA contains the active site tyrosine that forms a transient covalent intermediate with DNA, while GyrB binds cofactors and catalyzes ATP hydrolysis. Mg(2+) is required as a cofactor. Requires Mn(2+) as cofactor. It depends on Ca(2+) as a cofactor.

The protein resides in the cytoplasm. It carries out the reaction ATP-dependent breakage, passage and rejoining of double-stranded DNA.. DNA supercoiling is inhibited by EDTA, novobiocin, coumermycin and ciprofloxacin. A type II topoisomerase that negatively supercoils closed circular double-stranded DNA in an ATP-dependent manner and also catalyzes the interconversion of other topological isomers of double-stranded DNA rings, including catenanes and knotted rings. Relaxes negatively supercoiled DNA in an ATP-independent manner. A linear reaction intermediate can be trapped in the presence of the antibiotic ciprofloxacin. Negative supercoiling favors strand separation, and DNA replication, transcription, recombination and repair, all of which involve strand separation. Type II topoisomerases break and join 2 DNA strands simultaneously in an ATP-dependent manner. The polypeptide is DNA gyrase subunit B (Mycobacterium bovis (strain BCG / Pasteur 1173P2)).